The chain runs to 692 residues: Protein adenylyltransferase SelO-1, mitochondrial (692 aa).

Residues 1-24 constitute a mitochondrion transit peptide; it reads MASVGSRLTRFYISRPGVIARRFL. ATP is bound by residues G142, G144, K176, D188, G189, R246, and R253. Residue D337 is the Proton acceptor of the active site. 2 residues coordinate Mg(2+): N338 and D347. D347 is a binding site for ATP. The segment at 637–676 is disordered; it reads LEQPGWMGRGGAAIPGERDETEEEGSNSSGAGARGLVPYD. Residue U690 is a non-standard amino acid, selenocysteine.

Belongs to the SELO family. Requires Mg(2+) as cofactor.

The protein resides in the mitochondrion. The enzyme catalyses L-tyrosyl-[protein] + ATP = O-(5'-adenylyl)-L-tyrosyl-[protein] + diphosphate. It carries out the reaction L-threonyl-[protein] + ATP = 3-O-(5'-adenylyl)-L-threonyl-[protein] + diphosphate. The catalysed reaction is L-seryl-[protein] + ATP = 3-O-(5'-adenylyl)-L-seryl-[protein] + diphosphate. Functionally, catalyzes the transfer of adenosine 5'-monophosphate (AMP) to Ser, Thr and Tyr residues of target proteins (AMPylation). May be a redox-active mitochondrial selenoprotein which interacts with a redox target protein. This is Protein adenylyltransferase SelO-1, mitochondrial from Danio rerio (Zebrafish).